The chain runs to 569 residues: Urease subunit alpha (569 aa).

One can recognise a Urease domain in the interval 131–569; that stretch reads GGFDSHIHFI…LPMAQRYFLF (439 aa). Ni(2+) is bound by residues H136, H138, and K219. The residue at position 219 (K219) is an N6-carboxylysine. H221 serves as a coordination point for substrate. Ni(2+) is bound by residues H248 and H274. Catalysis depends on H322, which acts as the Proton donor. D362 is a Ni(2+) binding site.

This sequence belongs to the metallo-dependent hydrolases superfamily. Urease alpha subunit family. Heterotrimer of UreA (gamma), UreB (beta) and UreC (alpha) subunits. Three heterotrimers associate to form the active enzyme. Requires Ni cation as cofactor. Post-translationally, carboxylation allows a single lysine to coordinate two nickel ions.

Its subcellular location is the cytoplasm. It carries out the reaction urea + 2 H2O + H(+) = hydrogencarbonate + 2 NH4(+). It participates in nitrogen metabolism; urea degradation; CO(2) and NH(3) from urea (urease route): step 1/1. In Ruegeria pomeroyi (strain ATCC 700808 / DSM 15171 / DSS-3) (Silicibacter pomeroyi), this protein is Urease subunit alpha.